The chain runs to 466 residues: 3-isopropylmalate dehydratase large subunit (466 aa).

3 residues coordinate [4Fe-4S] cluster: Cys346, Cys406, and Cys409.

Belongs to the aconitase/IPM isomerase family. LeuC type 1 subfamily. In terms of assembly, heterodimer of LeuC and LeuD. It depends on [4Fe-4S] cluster as a cofactor.

It carries out the reaction (2R,3S)-3-isopropylmalate = (2S)-2-isopropylmalate. It participates in amino-acid biosynthesis; L-leucine biosynthesis; L-leucine from 3-methyl-2-oxobutanoate: step 2/4. Catalyzes the isomerization between 2-isopropylmalate and 3-isopropylmalate, via the formation of 2-isopropylmaleate. The sequence is that of 3-isopropylmalate dehydratase large subunit from Cytophaga hutchinsonii (strain ATCC 33406 / DSM 1761 / CIP 103989 / NBRC 15051 / NCIMB 9469 / D465).